Here is a 1072-residue protein sequence, read N- to C-terminus: DNA-directed RNA polymerase subunit beta (1072 aa).

The protein belongs to the RNA polymerase beta chain family. In plastids the minimal PEP RNA polymerase catalytic core is composed of four subunits: alpha, beta, beta', and beta''. When a (nuclear-encoded) sigma factor is associated with the core the holoenzyme is formed, which can initiate transcription.

Its subcellular location is the plastid. The protein localises to the chloroplast. The catalysed reaction is RNA(n) + a ribonucleoside 5'-triphosphate = RNA(n+1) + diphosphate. Its function is as follows. DNA-dependent RNA polymerase catalyzes the transcription of DNA into RNA using the four ribonucleoside triphosphates as substrates. This Amborella trichopoda protein is DNA-directed RNA polymerase subunit beta.